The sequence spans 360 residues: MKASMLAKLDQLAERLEEVNALLAREDATANIDQYRKLSREHAELSPVAEQYGFYRQAQDDLATAQALLDDPEMKDFAADEIASARERLESLEGSLQKLLLPKDPNDDRNLILEIRAGTGGEESALFAGDLLRMYTRFAERQRWQVEIMSESESDLGGYKEVIVRIAGDAAFSRLKFESGGHRVQRVPATEAQGRIHTSACTVAVMPEADEVGDVEINPSDLRIDTFRASGAGGQHVNKTDSAVRLTHLPTGIVVECQDDRSQHRNKDKAMKVLAARIKDQQMRAAQAKEASTRRNLIGSGDRSDRIRTYNFPQGRVTDHRINLTLYKIDMIMDGDLEELVSALAAEHQADQLAALGEDS.

Gln235 is subject to N5-methylglutamine.

This sequence belongs to the prokaryotic/mitochondrial release factor family. Methylated by PrmC. Methylation increases the termination efficiency of RF1.

It localises to the cytoplasm. In terms of biological role, peptide chain release factor 1 directs the termination of translation in response to the peptide chain termination codons UAG and UAA. This chain is Peptide chain release factor 1, found in Cupriavidus pinatubonensis (strain JMP 134 / LMG 1197) (Cupriavidus necator (strain JMP 134)).